The primary structure comprises 201 residues: Small ribosomal subunit protein uS4c (201 aa).

A disordered region spans residues glycine 16–glutamine 43. The 81-residue stretch at methionine 89–phenylalanine 169 folds into the S4 RNA-binding domain.

This sequence belongs to the universal ribosomal protein uS4 family. As to quaternary structure, part of the 30S ribosomal subunit. Contacts protein S5. The interaction surface between S4 and S5 is involved in control of translational fidelity.

It is found in the plastid. It localises to the chloroplast. Functionally, one of the primary rRNA binding proteins, it binds directly to 16S rRNA where it nucleates assembly of the body of the 30S subunit. Its function is as follows. With S5 and S12 plays an important role in translational accuracy. The chain is Small ribosomal subunit protein uS4c (rps4) from Nymphaea alba (White water-lily).